Reading from the N-terminus, the 261-residue chain is Maspardin (261 aa).

In terms of domain architecture, AB hydrolase-1 spans 87–159 (FCDGFRKLLD…NSFWLMPAFM (73 aa)). Residue Ser-257 is modified to Phosphoserine.

The protein belongs to the AB hydrolase superfamily. In terms of assembly, interacts with CD4. Interacts with ALDH16A1.

The protein resides in the cytoplasm. Functionally, may play a role as a negative regulatory factor in CD4-dependent T-cell activation. This chain is Maspardin (Spg21), found in Rattus norvegicus (Rat).